We begin with the raw amino-acid sequence, 88 residues long: Cell division topological specificity factor (88 aa).

The protein belongs to the MinE family.

Its function is as follows. Prevents the cell division inhibition by proteins MinC and MinD at internal division sites while permitting inhibition at polar sites. This ensures cell division at the proper site by restricting the formation of a division septum at the midpoint of the long axis of the cell. This chain is Cell division topological specificity factor, found in Methylibium petroleiphilum (strain ATCC BAA-1232 / LMG 22953 / PM1).